Consider the following 521-residue polypeptide: Tetratricopeptide repeat and J domain-containing co-chaperone DNJ1 (521 aa).

The first 21 residues, methionine 1–alanine 21, serve as a signal peptide directing secretion. TPR repeat units lie at residues valine 33–asparagine 66, tyrosine 67–phenylalanine 100, glycine 102–alanine 134, proline 176–aspartate 209, serine 211–serine 244, leucine 315–serine 348, and phenylalanine 349–glutamine 382. Residues aspartate 404–aspartate 473 form the J domain. Residues glutamate 464–aspartate 474 show a composition bias toward basic and acidic residues. Positions glutamate 464–phenylalanine 521 are disordered. Positions asparagine 489–proline 508 are enriched in gly residues. The segment covering asparagine 509 to phenylalanine 521 has biased composition (low complexity).

The protein localises to the endoplasmic reticulum lumen. In terms of biological role, endoplasmic reticulum co-chaperone required for the of virulence factors such as PG1, the major endopolygalacturonase produced during the infection of tomato plants. The chain is Tetratricopeptide repeat and J domain-containing co-chaperone DNJ1 from Fusarium oxysporum f. sp. lycopersici (strain 4287 / CBS 123668 / FGSC 9935 / NRRL 34936) (Fusarium vascular wilt of tomato).